Here is a 166-residue protein sequence, read N- to C-terminus: Phosphopantetheine adenylyltransferase (166 aa).

Residue Ser11 coordinates substrate. ATP contacts are provided by residues 11 to 12 and His19; that span reads SF. Substrate-binding residues include Lys43, Val80, and Arg94. ATP-binding positions include 95–97, Glu105, and 130–136; these read GLR and VRTITAT.

It belongs to the bacterial CoaD family. Homohexamer. Mg(2+) serves as cofactor.

The protein resides in the cytoplasm. It carries out the reaction (R)-4'-phosphopantetheine + ATP + H(+) = 3'-dephospho-CoA + diphosphate. It functions in the pathway cofactor biosynthesis; coenzyme A biosynthesis; CoA from (R)-pantothenate: step 4/5. Functionally, reversibly transfers an adenylyl group from ATP to 4'-phosphopantetheine, yielding dephospho-CoA (dPCoA) and pyrophosphate. The sequence is that of Phosphopantetheine adenylyltransferase from Mesorhizobium japonicum (strain LMG 29417 / CECT 9101 / MAFF 303099) (Mesorhizobium loti (strain MAFF 303099)).